The chain runs to 384 residues: tRNA(Met) cytidine acetate ligase (384 aa).

ATP-binding positions include 7–20 (VAEY…HEFL), G101, N153, and R178.

This sequence belongs to the TmcAL family.

It localises to the cytoplasm. The enzyme catalyses cytidine(34) in elongator tRNA(Met) + acetate + ATP = N(4)-acetylcytidine(34) in elongator tRNA(Met) + AMP + diphosphate. Catalyzes the formation of N(4)-acetylcytidine (ac(4)C) at the wobble position of elongator tRNA(Met), using acetate and ATP as substrates. First activates an acetate ion to form acetyladenylate (Ac-AMP) and then transfers the acetyl group to tRNA to form ac(4)C34. The polypeptide is tRNA(Met) cytidine acetate ligase (Lactobacillus delbrueckii subsp. bulgaricus (strain ATCC BAA-365 / Lb-18)).